Here is a 189-residue protein sequence, read N- to C-terminus: Molybdenum cofactor guanylyltransferase (189 aa).

Residues 10-12, Lys23, Asn51, Asp69, and Asp99 contribute to the GTP site; that span reads LAG. Asp99 is a Mg(2+) binding site.

This sequence belongs to the MobA family. Monomer. The cofactor is Mg(2+).

Its subcellular location is the cytoplasm. It catalyses the reaction Mo-molybdopterin + GTP + H(+) = Mo-molybdopterin guanine dinucleotide + diphosphate. Functionally, transfers a GMP moiety from GTP to Mo-molybdopterin (Mo-MPT) cofactor (Moco or molybdenum cofactor) to form Mo-molybdopterin guanine dinucleotide (Mo-MGD) cofactor. This chain is Molybdenum cofactor guanylyltransferase, found in Pasteurella multocida (strain Pm70).